The following is a 605-amino-acid chain: Pyruvate decarboxylase 2 (605 aa).

Substrate-binding residues include Asp68 and His155. The thiamine pyrophosphate binding stretch occupies residues 433 to 515; that stretch reads DSWFNCQKLK…FLINNGGYTI (83 aa). Mg(2+)-binding residues include Asp483, Asn510, and Gly512. Glu516 provides a ligand contact to substrate.

Belongs to the TPP enzyme family. Homotetramer. It depends on a metal cation as a cofactor. The cofactor is thiamine diphosphate.

The catalysed reaction is a 2-oxocarboxylate + H(+) = an aldehyde + CO2. The sequence is that of Pyruvate decarboxylase 2 (PDC2) from Oryza sativa subsp. japonica (Rice).